Reading from the N-terminus, the 712-residue chain is Polyphosphate kinase (712 aa).

Asn49 serves as a coordination point for ATP. 2 residues coordinate Mg(2+): Arg398 and Arg428. His458 functions as the Phosphohistidine intermediate in the catalytic mechanism. ATP is bound by residues Tyr491, Arg587, and His615.

This sequence belongs to the polyphosphate kinase 1 (PPK1) family. Requires Mg(2+) as cofactor. An intermediate of this reaction is the autophosphorylated ppk in which a phosphate is covalently linked to a histidine residue through a N-P bond.

The enzyme catalyses [phosphate](n) + ATP = [phosphate](n+1) + ADP. Its function is as follows. Catalyzes the reversible transfer of the terminal phosphate of ATP to form a long-chain polyphosphate (polyP). This Prochlorococcus marinus (strain MIT 9313) protein is Polyphosphate kinase.